The sequence spans 207 residues: Adenylyl-sulfate kinase (207 aa).

39–46 is an ATP binding site; sequence GLSGAGKS. The active-site Phosphoserine intermediate is the Ser113.

The protein belongs to the APS kinase family.

The enzyme catalyses adenosine 5'-phosphosulfate + ATP = 3'-phosphoadenylyl sulfate + ADP + H(+). It participates in sulfur metabolism; hydrogen sulfide biosynthesis; sulfite from sulfate: step 2/3. Catalyzes the synthesis of activated sulfate. The protein is Adenylyl-sulfate kinase of Vibrio vulnificus (strain CMCP6).